The chain runs to 335 residues: Stearoyl-CoA desaturase 5 (335 aa).

At 1 to 54 (MPGPAVDAEKVPFRSAKEEIRAGVGVEGSEGGGGGGGRERPGARGHRQDIVWRN) the chain is on the cytoplasmic side. The interval 24 to 44 (VGVEGSEGGGGGGGRERPGAR) is disordered. The span at 25-36 (GVEGSEGGGGGG) shows a compositional bias: gly residues. Asparagine 54 is a binding site for substrate. Residues 55–75 (VFLMSLLHLAAVYSLVLIPKA) traverse the membrane as a helical segment. Over 76–77 (QP) the chain is Lumenal. A helical transmembrane segment spans residues 78–98 (LTLLWAYFCFLLTALGVTAGA). Histidine 99 and histidine 104 together coordinate Fe cation. The short motif at 99–104 (HRLWSH) is the Histidine box-1 element. The Cytoplasmic portion of the chain corresponds to 99–198 (HRLWSHRSYK…VVRFQRKYYK (100 aa)). Substrate is bound by residues asparagine 127, arginine 134, and aspartate 135. Fe cation-binding residues include histidine 136, histidine 139, and histidine 140. A Histidine box-2 motif is present at residues 136–140 (HRVHH). Substrate contacts are provided by arginine 167 and lysine 168. The chain crosses the membrane as a helical span at residues 199-219 (ITVVLMCFVVPTLVPWYIWGE). At 220–227 (SLWNSYFL) the chain is on the lumenal side. The chain crosses the membrane as a helical span at residues 228–247 (ASILRYTISLNVTWLVNSVA). Substrate is bound at residue tryptophan 241. Histidine 248, histidine 277, histidine 280, and histidine 281 together coordinate Fe cation. Residues 248–335 (HMYGNRPYDK…RKARTGDGSA (88 aa)) lie on the Cytoplasmic side of the membrane. A Histidine box-3 motif is present at residues 277–281 (HNYHH).

This sequence belongs to the fatty acid desaturase type 1 family. May self-associate and form homodimers. The cofactor is Fe(2+). Detected in brain.

It is found in the endoplasmic reticulum membrane. The enzyme catalyses octadecanoyl-CoA + 2 Fe(II)-[cytochrome b5] + O2 + 2 H(+) = (9Z)-octadecenoyl-CoA + 2 Fe(III)-[cytochrome b5] + 2 H2O. It catalyses the reaction hexadecanoyl-CoA + 2 Fe(II)-[cytochrome b5] + O2 + 2 H(+) = (9Z)-hexadecenoyl-CoA + 2 Fe(III)-[cytochrome b5] + 2 H2O. Stearoyl-CoA desaturase that utilizes O(2) and electrons from reduced cytochrome b5 to introduce the first double bond into saturated fatty acyl-CoA substrates. Catalyzes the insertion of a cis double bond at the delta-9 position into fatty acyl-CoA substrates including palmitoyl-CoA and stearoyl-CoA. Gives rise to a mixture of 16:1 and 18:1 unsaturated fatty acids. Involved in neuronal cell proliferation and differentiation through down-regulation of EGFR/AKT/MAPK and Wnt signaling pathways. This is Stearoyl-CoA desaturase 5 (SCD5) from Bos taurus (Bovine).